The primary structure comprises 412 residues: Type II methyltransferase M.Sau3AI (412 aa).

Residues 4–402 (IKVVELFAGV…NQIEKIDSIT (399 aa)) form the SAM-dependent MTase C5-type domain. Cysteine 85 is a catalytic residue.

This sequence belongs to the class I-like SAM-binding methyltransferase superfamily. C5-methyltransferase family.

It catalyses the reaction a 2'-deoxycytidine in DNA + S-adenosyl-L-methionine = a 5-methyl-2'-deoxycytidine in DNA + S-adenosyl-L-homocysteine + H(+). A methylase that recognizes the double-stranded sequence 5'-GATC-3', methylates C-4 on both strands and protects the DNA from cleavage by the Sau3AI endonuclease. This Staphylococcus aureus protein is Type II methyltransferase M.Sau3AI (sau3AIM).